Here is a 471-residue protein sequence, read N- to C-terminus: ATP synthase subunit beta (471 aa).

Position 156 to 163 (156 to 163 (GGAGVGKT)) interacts with ATP.

Belongs to the ATPase alpha/beta chains family. As to quaternary structure, F-type ATPases have 2 components, CF(1) - the catalytic core - and CF(0) - the membrane proton channel. CF(1) has five subunits: alpha(3), beta(3), gamma(1), delta(1), epsilon(1). CF(0) has three main subunits: a(1), b(2) and c(9-12). The alpha and beta chains form an alternating ring which encloses part of the gamma chain. CF(1) is attached to CF(0) by a central stalk formed by the gamma and epsilon chains, while a peripheral stalk is formed by the delta and b chains.

It is found in the cell membrane. It catalyses the reaction ATP + H2O + 4 H(+)(in) = ADP + phosphate + 5 H(+)(out). In terms of biological role, produces ATP from ADP in the presence of a proton gradient across the membrane. The catalytic sites are hosted primarily by the beta subunits. This Staphylococcus carnosus (strain TM300) protein is ATP synthase subunit beta.